The sequence spans 437 residues: Adenylosuccinate synthetase (437 aa).

Residues 12-18 and 40-42 contribute to the GTP site; these read GDEGKGK and GHT. Asp13 (proton acceptor) is an active-site residue. 2 residues coordinate Mg(2+): Asp13 and Gly40. IMP contacts are provided by residues 13–16, 38–41, Thr128, Arg142, Gln223, Thr238, and Arg302; these read DEGK and NAGH. His41 serves as the catalytic Proton donor. 298 to 304 is a substrate binding site; that stretch reads TTTGRRR. Residues Arg304, 330 to 332, and 412 to 414 each bind GTP; these read KLD and SLG.

Belongs to the adenylosuccinate synthetase family. As to quaternary structure, homodimer. The cofactor is Mg(2+).

Its subcellular location is the cytoplasm. The catalysed reaction is IMP + L-aspartate + GTP = N(6)-(1,2-dicarboxyethyl)-AMP + GDP + phosphate + 2 H(+). It participates in purine metabolism; AMP biosynthesis via de novo pathway; AMP from IMP: step 1/2. Functionally, plays an important role in the de novo pathway of purine nucleotide biosynthesis. Catalyzes the first committed step in the biosynthesis of AMP from IMP. In Synechococcus sp. (strain RCC307), this protein is Adenylosuccinate synthetase.